A 423-amino-acid chain; its full sequence is Gamma-glutamyl phosphate reductase (423 aa).

Belongs to the gamma-glutamyl phosphate reductase family.

Its subcellular location is the cytoplasm. It carries out the reaction L-glutamate 5-semialdehyde + phosphate + NADP(+) = L-glutamyl 5-phosphate + NADPH + H(+). Its pathway is amino-acid biosynthesis; L-proline biosynthesis; L-glutamate 5-semialdehyde from L-glutamate: step 2/2. Catalyzes the NADPH-dependent reduction of L-glutamate 5-phosphate into L-glutamate 5-semialdehyde and phosphate. The product spontaneously undergoes cyclization to form 1-pyrroline-5-carboxylate. The chain is Gamma-glutamyl phosphate reductase from Burkholderia ambifaria (strain ATCC BAA-244 / DSM 16087 / CCUG 44356 / LMG 19182 / AMMD) (Burkholderia cepacia (strain AMMD)).